We begin with the raw amino-acid sequence, 429 residues long: Tryptophan synthase beta chain 2 (429 aa).

Lysine 111 bears the N6-(pyridoxal phosphate)lysine mark.

Belongs to the TrpB family. As to quaternary structure, tetramer of two alpha and two beta chains. Pyridoxal 5'-phosphate serves as cofactor.

It catalyses the reaction (1S,2R)-1-C-(indol-3-yl)glycerol 3-phosphate + L-serine = D-glyceraldehyde 3-phosphate + L-tryptophan + H2O. The protein operates within amino-acid biosynthesis; L-tryptophan biosynthesis; L-tryptophan from chorismate: step 5/5. Its function is as follows. The beta subunit is responsible for the synthesis of L-tryptophan from indole and L-serine. The polypeptide is Tryptophan synthase beta chain 2 (trpB2) (Saccharolobus solfataricus (strain ATCC 35092 / DSM 1617 / JCM 11322 / P2) (Sulfolobus solfataricus)).